Reading from the N-terminus, the 137-residue chain is MGAHLVRRYLGDASVEPDPLQMPTFPPDYGFPERKEREMVATQQEMMDAQLRLQLRDYCAHHLIRLLKCKRDSFPNFLACKQERHDWDYCEHRDYVMRMKEFERERRLLQRKKRREKKAAELAKGQGPGEVDPKVAL.

The N-myristoyl glycine moiety is linked to residue glycine 2. The CHCH domain maps to 56-98; sequence RDYCAHHLIRLLKCKRDSFPNFLACKQERHDWDYCEHRDYVMR. The short motif at 59–69 is the Cx9C motif 1 element; sequence CAHHLIRLLKC. 2 disulfides stabilise this stretch: cysteine 59–cysteine 90 and cysteine 69–cysteine 80. Position 73 is a phosphoserine (serine 73). The Cx9C motif 2 signature appears at 80 to 90; it reads CKQERHDWDYC. The segment at 113-137 is disordered; the sequence is KRREKKAAELAKGQGPGEVDPKVAL.

Belongs to the complex I NDUFB7 subunit family. Complex I is composed of 45 different subunits.

Its subcellular location is the mitochondrion inner membrane. It localises to the mitochondrion intermembrane space. Accessory subunit of the mitochondrial membrane respiratory chain NADH dehydrogenase (Complex I), that is believed not to be involved in catalysis. Complex I functions in the transfer of electrons from NADH to the respiratory chain. The immediate electron acceptor for the enzyme is believed to be ubiquinone. In Homo sapiens (Human), this protein is NADH dehydrogenase [ubiquinone] 1 beta subcomplex subunit 7 (NDUFB7).